We begin with the raw amino-acid sequence, 270 residues long: ATP synthase subunit a (270 aa).

A run of 5 helical transmembrane segments spans residues 40–60 (IDSL…FYAV), 98–118 (IAPL…MDLV), 143–163 (DVNI…YYSI), 208–228 (LFGN…MLPW), and 239–259 (AIFH…LTIV).

The protein belongs to the ATPase A chain family. F-type ATPases have 2 components, CF(1) - the catalytic core - and CF(0) - the membrane proton channel. CF(1) has five subunits: alpha(3), beta(3), gamma(1), delta(1), epsilon(1). CF(0) has three main subunits: a(1), b(2) and c(9-12). The alpha and beta chains form an alternating ring which encloses part of the gamma chain. CF(1) is attached to CF(0) by a central stalk formed by the gamma and epsilon chains, while a peripheral stalk is formed by the delta and b chains.

It localises to the cell inner membrane. Its function is as follows. Key component of the proton channel; it plays a direct role in the translocation of protons across the membrane. The sequence is that of ATP synthase subunit a from Vibrio vulnificus (strain CMCP6).